A 126-amino-acid polypeptide reads, in one-letter code: Fluoride-specific ion channel FluC (126 aa).

Transmembrane regions (helical) follow at residues 1 to 21 (MIVI…FGLD), 40 to 60 (LATL…GGFA), 72 to 92 (AISI…VATV), and 104 to 124 (MVNI…GLSL). Na(+) contacts are provided by Gly79 and Thr82.

This sequence belongs to the fluoride channel Fluc/FEX (TC 1.A.43) family.

The protein localises to the cell membrane. The enzyme catalyses fluoride(in) = fluoride(out). Na(+) is not transported, but it plays an essential structural role and its presence is essential for fluoride channel function. In terms of biological role, fluoride-specific ion channel. Important for reducing fluoride concentration in the cell, thus reducing its toxicity. The polypeptide is Fluoride-specific ion channel FluC (Renibacterium salmoninarum (strain ATCC 33209 / DSM 20767 / JCM 11484 / NBRC 15589 / NCIMB 2235)).